The sequence spans 95 residues: Aspartyl/glutamyl-tRNA(Asn/Gln) amidotransferase subunit C (95 aa).

It belongs to the GatC family. In terms of assembly, heterotrimer of A, B and C subunits.

It carries out the reaction L-glutamyl-tRNA(Gln) + L-glutamine + ATP + H2O = L-glutaminyl-tRNA(Gln) + L-glutamate + ADP + phosphate + H(+). It catalyses the reaction L-aspartyl-tRNA(Asn) + L-glutamine + ATP + H2O = L-asparaginyl-tRNA(Asn) + L-glutamate + ADP + phosphate + 2 H(+). Its function is as follows. Allows the formation of correctly charged Asn-tRNA(Asn) or Gln-tRNA(Gln) through the transamidation of misacylated Asp-tRNA(Asn) or Glu-tRNA(Gln) in organisms which lack either or both of asparaginyl-tRNA or glutaminyl-tRNA synthetases. The reaction takes place in the presence of glutamine and ATP through an activated phospho-Asp-tRNA(Asn) or phospho-Glu-tRNA(Gln). The chain is Aspartyl/glutamyl-tRNA(Asn/Gln) amidotransferase subunit C from Xanthobacter autotrophicus (strain ATCC BAA-1158 / Py2).